The primary structure comprises 276 residues: Putative pyruvate, phosphate dikinase regulatory protein (276 aa).

Position 150–157 (150–157 (GVSRTSKT)) interacts with ADP.

Belongs to the pyruvate, phosphate/water dikinase regulatory protein family. PDRP subfamily.

The enzyme catalyses N(tele)-phospho-L-histidyl/L-threonyl-[pyruvate, phosphate dikinase] + ADP = N(tele)-phospho-L-histidyl/O-phospho-L-threonyl-[pyruvate, phosphate dikinase] + AMP + H(+). It carries out the reaction N(tele)-phospho-L-histidyl/O-phospho-L-threonyl-[pyruvate, phosphate dikinase] + phosphate + H(+) = N(tele)-phospho-L-histidyl/L-threonyl-[pyruvate, phosphate dikinase] + diphosphate. Functionally, bifunctional serine/threonine kinase and phosphorylase involved in the regulation of the pyruvate, phosphate dikinase (PPDK) by catalyzing its phosphorylation/dephosphorylation. The sequence is that of Putative pyruvate, phosphate dikinase regulatory protein from Lacticaseibacillus casei (strain BL23) (Lactobacillus casei).